The sequence spans 509 residues: Maturase K (509 aa).

The protein belongs to the intron maturase 2 family. MatK subfamily.

It localises to the plastid. The protein localises to the chloroplast. Functionally, usually encoded in the trnK tRNA gene intron. Probably assists in splicing its own and other chloroplast group II introns. In Thujopsis dolabrata (Hiba arborvitae), this protein is Maturase K.